Reading from the N-terminus, the 71-residue chain is DNA-directed RNA polymerase subunit omega (71 aa).

The protein belongs to the RNA polymerase subunit omega family. The RNAP catalytic core consists of 2 alpha, 1 beta, 1 beta' and 1 omega subunit. When a sigma factor is associated with the core the holoenzyme is formed, which can initiate transcription.

The enzyme catalyses RNA(n) + a ribonucleoside 5'-triphosphate = RNA(n+1) + diphosphate. Its function is as follows. Promotes RNA polymerase assembly. Latches the N- and C-terminal regions of the beta' subunit thereby facilitating its interaction with the beta and alpha subunits. The sequence is that of DNA-directed RNA polymerase subunit omega from Alkaliphilus oremlandii (strain OhILAs) (Clostridium oremlandii (strain OhILAs)).